Consider the following 495-residue polypeptide: GTPase Der (495 aa).

2 consecutive EngA-type G domains span residues 3 to 166 and 208 to 381; these read PVVA…VQDE and IKLA…ACAT. Residues 9-16, 56-60, 118-121, 214-221, 261-265, and 326-329 each bind GTP; these read GRPNVGKS, DTGGI, NKTD, DTAGV, and NKWD. In terms of domain architecture, KH-like spans 382-466; sequence RRVSTAMLTR…PIRIQFKEGE (85 aa).

It belongs to the TRAFAC class TrmE-Era-EngA-EngB-Septin-like GTPase superfamily. EngA (Der) GTPase family. As to quaternary structure, associates with the 50S ribosomal subunit.

Functionally, GTPase that plays an essential role in the late steps of ribosome biogenesis. In Pectobacterium carotovorum subsp. carotovorum (strain PC1), this protein is GTPase Der.